The primary structure comprises 788 residues: Xylulose-5-phosphate phosphoketolase (788 aa).

This sequence belongs to the XFP family. Homohexamer. Thiamine diphosphate serves as cofactor.

The enzyme catalyses D-xylulose 5-phosphate + phosphate = acetyl phosphate + D-glyceraldehyde 3-phosphate + H2O. This chain is Xylulose-5-phosphate phosphoketolase (xpkA), found in Lactiplantibacillus pentosus (Lactobacillus pentosus).